The primary structure comprises 1052 residues: F-box/WD repeat-containing protein 10 (1052 aa).

Residues 169 to 206 form a WD 1 repeat; sequence GLNQDITDVCFSPEKDHSSKSATSQVYWTAKTQHTSLP. The F-box domain occupies 276 to 323; that stretch reads DFIRYLPIHLSKYILRMLDRHTLNKCASVSQHWAAMAQQVKMDLSAHG. WD repeat units lie at residues 409-447, 451-490, 493-532, 534-569, 572-609, and 611-652; these read SDTWDQNRVIHYSGGDLIAVSSNRKIHLLDIIQVKAIPV, GHAGSVRALFLCEEENFLLSGSYDLSIRYWDLKSGVCTRI, GHQGTITCMDLCKNRLVSGGRDCQVKVWDVDTGKCLKTFR, KDPILATRINDTYIVSSCERGLVKVWHIAMAQLVKT, GHEGAVKCLFFDQWHLLSGSTDGLVMAWSMVGKYERCL, and AFKH…KVLK. A coiled-coil region spans residues 690–719; that stretch reads YAVEKTKQKKNKEKEEEKEENSLMEILSKC. Residues 766 to 805 form a disordered region; sequence LQSQGKSKSPRRDADDVEKAQKQGQLETPGKLPSHPKKKS. The span at 775–786 shows a compositional bias: basic and acidic residues; the sequence is PRRDADDVEKAQ. A coiled-coil region spans residues 986–1010; it reads VLLTVKEEKEHQEAKMKEYQAREST.

In terms of biological role, probable substrate-recognition component of a SCF (SKP1-CUL1-F-box protein)-type E3 ubiquitin ligase complex which mediates the ubiquitination and subsequent proteasomal degradation of target proteins. Overexpression is leading to degradation of CBX5 and CBX1. The chain is F-box/WD repeat-containing protein 10 (FBXW10) from Homo sapiens (Human).